A 165-amino-acid polypeptide reads, in one-letter code: Large ribosomal subunit protein uL15 (165 aa).

Residues 1–29 (MTSKKKRQRGSRTHGGGSHKNRRGAGHRG) show a composition bias toward basic residues. Disordered stretches follow at residues 1-59 (MTSK…QKVQ) and 133-165 (KVEG…ADEE). Positions 30–47 (GRGDAGRDKHEFHNHEPL) are enriched in basic and acidic residues. A compositionally biased stretch (acidic residues) spans 154–165 (AEETEDADADEE).

It belongs to the universal ribosomal protein uL15 family. Part of the 50S ribosomal subunit. Interacts weakly with proteins L18e and L32e.

In terms of biological role, binds to the 23S rRNA. The polypeptide is Large ribosomal subunit protein uL15 (rpl15) (Haloarcula marismortui (strain ATCC 43049 / DSM 3752 / JCM 8966 / VKM B-1809) (Halobacterium marismortui)).